Reading from the N-terminus, the 101-residue chain is Putative pterin-4-alpha-carbinolamine dehydratase (101 aa).

Belongs to the pterin-4-alpha-carbinolamine dehydratase family.

It catalyses the reaction (4aS,6R)-4a-hydroxy-L-erythro-5,6,7,8-tetrahydrobiopterin = (6R)-L-erythro-6,7-dihydrobiopterin + H2O. This chain is Putative pterin-4-alpha-carbinolamine dehydratase, found in Nitrobacter hamburgensis (strain DSM 10229 / NCIMB 13809 / X14).